Here is a 310-residue protein sequence, read N- to C-terminus: Aspartate carbamoyltransferase catalytic subunit (310 aa).

Residues Arg59 and Thr60 each contribute to the carbamoyl phosphate site. Lys87 lines the L-aspartate pocket. Carbamoyl phosphate is bound by residues Arg109, His139, and Gln142. The L-aspartate site is built by Arg172 and Arg224. Carbamoyl phosphate-binding residues include Ala265 and Pro266.

Belongs to the aspartate/ornithine carbamoyltransferase superfamily. ATCase family. In terms of assembly, heterododecamer (2C3:3R2) of six catalytic PyrB chains organized as two trimers (C3), and six regulatory PyrI chains organized as three dimers (R2).

The catalysed reaction is carbamoyl phosphate + L-aspartate = N-carbamoyl-L-aspartate + phosphate + H(+). The protein operates within pyrimidine metabolism; UMP biosynthesis via de novo pathway; (S)-dihydroorotate from bicarbonate: step 2/3. Its function is as follows. Catalyzes the condensation of carbamoyl phosphate and aspartate to form carbamoyl aspartate and inorganic phosphate, the committed step in the de novo pyrimidine nucleotide biosynthesis pathway. In Lactococcus lactis subsp. cremoris (strain MG1363), this protein is Aspartate carbamoyltransferase catalytic subunit.